The primary structure comprises 144 residues: Maximins 7/H1 (144 aa).

The N-terminal stretch at 1 to 18 (MNFKYIVAVSFLIASAYA) is a signal peptide. A propeptide spanning residues 19–43 (RSEENDEQSLSQRDVLEEESLREIR) is cleaved from the precursor. N70 bears the Asparagine amide mark. A propeptide spanning residues 74–123 (TAEDHEVMKRLEAVMRDLDSLDYPEEAAERETRGFNQEEIANLFTKKEKR) is cleaved from the precursor. Residue L143 is modified to Leucine amide.

Belongs to the bombinin family. In terms of tissue distribution, expressed by the skin glands.

It localises to the secreted. Maximin-7 shows antimicrobial activity against bacteria and against the fungus C.albicans. It has little hemolytic activity. Its function is as follows. Maximin-H1 shows antibacterial activity against both Gram-positive and Gram-negative bacteria. It also shows antimicrobial activity against the fungus C.albicans. Shows strong hemolytic activity. This Bombina maxima (Giant fire-bellied toad) protein is Maximins 7/H1.